Here is a 539-residue protein sequence, read N- to C-terminus: Phosphoenolpyruvate carboxykinase (ATP) (539 aa).

The substrate site is built by R64, Y206, and K212. Residues K212, H231, and 247 to 255 (GLSGTGKTT) contribute to the ATP site. The Mn(2+) site is built by K212 and H231. D268 provides a ligand contact to Mn(2+). ATP contacts are provided by residues E296, R332, 448–449 (RI), and T454. R332 serves as a coordination point for substrate.

The protein belongs to the phosphoenolpyruvate carboxykinase (ATP) family. In terms of assembly, monomer. Mn(2+) serves as cofactor.

It localises to the cytoplasm. It carries out the reaction oxaloacetate + ATP = phosphoenolpyruvate + ADP + CO2. The protein operates within carbohydrate biosynthesis; gluconeogenesis. In terms of biological role, involved in the gluconeogenesis. Catalyzes the conversion of oxaloacetate (OAA) to phosphoenolpyruvate (PEP) through direct phosphoryl transfer between the nucleoside triphosphate and OAA. The sequence is that of Phosphoenolpyruvate carboxykinase (ATP) from Salmonella gallinarum (strain 287/91 / NCTC 13346).